Consider the following 347-residue polypeptide: Phosphate acyltransferase (347 aa).

It belongs to the PlsX family. In terms of assembly, homodimer. Probably interacts with PlsY.

The protein localises to the cytoplasm. It catalyses the reaction a fatty acyl-[ACP] + phosphate = an acyl phosphate + holo-[ACP]. It participates in lipid metabolism; phospholipid metabolism. In terms of biological role, catalyzes the reversible formation of acyl-phosphate (acyl-PO(4)) from acyl-[acyl-carrier-protein] (acyl-ACP). This enzyme utilizes acyl-ACP as fatty acyl donor, but not acyl-CoA. The sequence is that of Phosphate acyltransferase from Oleidesulfovibrio alaskensis (strain ATCC BAA-1058 / DSM 17464 / G20) (Desulfovibrio alaskensis).